The following is a 195-amino-acid chain: Myelin-associated neurite-outgrowth inhibitor (195 aa).

The Cytoplasmic portion of the chain corresponds to 1-18; sequence MNPVYSPGSSGVPYANAK. The helical transmembrane segment at 19–43 threads the bilayer; sequence GIGYPAGFPMGYAAAAPAYSPNMYA. The Extracellular portion of the chain corresponds to 44 to 143; that stretch reads GPNPAFQPGY…APIPQPRGNG (100 aa). The chain crosses the membrane as a helical span at residues 144-162; that stretch reads VAMGMVAGTTMAMSAGTLL. The Cytoplasmic segment spans residues 163–195; it reads TSHYPTPVAPHQVTMPTYRPPGTPTYSYVPPQW.

Belongs to the FAM168 family.

It localises to the cytoplasm. The protein resides in the perinuclear region. The protein localises to the cell membrane. Its subcellular location is the cell projection. It is found in the axon. Inhibitor of neuronal axonal outgrowth. The polypeptide is Myelin-associated neurite-outgrowth inhibitor (fam168b) (Xenopus tropicalis (Western clawed frog)).